The chain runs to 630 residues: MSTNSGNNLPESQESPEEPHYPHDTHPGLVPGISVDAQRNKFGLDKTVFGVTAALILAFIAWGISSPDSVSSVSSTMFSWAMTNTGWLLNFVMLIGIGTMLYIAFSRYGRIKLGTDEDEPEFSRFSWIAMMFGAGIGVGIFFFGPSEPLWHYLSPPPHTVEGSTPESLHQALAQSHFHWGLSAWGLYALVGGALAYSSYRRGRVTLISSTFRSLFGEKTEGIAGRLIDMMAIIATLFGTAATLGLSAIQVGQGVQIISGASEITNNILIAIIAILTIGFIISSVSGVSKGIRYLSNLNISLTLGLVLFVFITGPTLFLLNLIPSSVLEYGSEFLSMAGKSLSWGEETIEFQAGWTAFYWAWWIAWTPFVGMFIARISRGRTLREFALITMAIPSFILILAFTIFGGTAITMNRENVDGFDGSSSKEQVLFDMFSNLPLYSITPFILIFVLAVFFVTSADSASVVMGTMSSQGNPAPNKLIVVFWGLCMMGIAVVMLLTGGESALTGLQNLTILIAIPFALVLIVMAIAFIKDLSTDPAAIRQRYAKAAISNAVVRGLEEHGDDFELSIEPAEEGRGAGATFDSTADHITDWYQRTDEEGNDVDYDFTTGKWADGWTPESTEEGEVDAKKD.

Residues 1 to 13 (MSTNSGNNLPESQ) show a composition bias toward polar residues. The interval 1–28 (MSTNSGNNLPESQESPEEPHYPHDTHPG) is disordered. A compositionally biased stretch (basic and acidic residues) spans 17–26 (EEPHYPHDTH). 12 helical membrane passes run 47–67 (TVFGVTAALILAFIAWGISSP), 85–105 (TGWLLNFVMLIGIGTMLYIAF), 125–145 (FSWIAMMFGAGIGVGIFFFGP), 177–197 (FHWGLSAWGLYALVGGALAYS), 230–250 (MAIIATLFGTAATLGLSAIQV), 267–287 (ILIAIIAILTIGFIISSVSGV), 299–319 (ISLTLGLVLFVFITGPTLFLL), 354–374 (WTAFYWAWWIAWTPFVGMFIA), 385–405 (FALITMAIPSFILILAFTIFG), 436–456 (LPLYSITPFILIFVLAVFFVT), 479–499 (LIVVFWGLCMMGIAVVMLLTG), and 510–530 (LTILIAIPFALVLIVMAIAFI). Residues 611-630 (WADGWTPESTEEGEVDAKKD) form a disordered region.

It belongs to the BCCT transporter (TC 2.A.15) family.

The protein localises to the cell membrane. Its activity is regulated as follows. Uptake is activated by hyperosmotic stress. Shows a small but significant chill stimulation around 15 degrees Celsius. In terms of biological role, involved in the uptake of osmoprotectants. Can transport betaine and ectoine. Na(+) is probably the coupling ion. The sequence is that of Betaine/ectoine transporter LcoP from Corynebacterium glutamicum (strain ATCC 13032 / DSM 20300 / JCM 1318 / BCRC 11384 / CCUG 27702 / LMG 3730 / NBRC 12168 / NCIMB 10025 / NRRL B-2784 / 534).